The following is a 196-amino-acid chain: NAD(P)H-quinone oxidoreductase subunit I (196 aa).

4Fe-4S ferredoxin-type domains lie at Gly-55–Glu-84 and Lys-95–Glu-124. [4Fe-4S] cluster contacts are provided by Cys-64, Cys-67, Cys-70, Cys-74, Cys-104, Cys-107, Cys-110, and Cys-114. A disordered region spans residues Ser-170 to Ser-196.

The protein belongs to the complex I 23 kDa subunit family. As to quaternary structure, NDH-1 is composed of at least 11 different subunits. [4Fe-4S] cluster is required as a cofactor.

It is found in the cellular thylakoid membrane. The enzyme catalyses a plastoquinone + NADH + (n+1) H(+)(in) = a plastoquinol + NAD(+) + n H(+)(out). It catalyses the reaction a plastoquinone + NADPH + (n+1) H(+)(in) = a plastoquinol + NADP(+) + n H(+)(out). Functionally, NDH-1 shuttles electrons from an unknown electron donor, via FMN and iron-sulfur (Fe-S) centers, to quinones in the respiratory and/or the photosynthetic chain. The immediate electron acceptor for the enzyme in this species is believed to be plastoquinone. Couples the redox reaction to proton translocation, and thus conserves the redox energy in a proton gradient. The protein is NAD(P)H-quinone oxidoreductase subunit I of Crocosphaera subtropica (strain ATCC 51142 / BH68) (Cyanothece sp. (strain ATCC 51142)).